We begin with the raw amino-acid sequence, 129 residues long: Succinate dehydrogenase subunit 3-2, mitochondrial (129 aa).

The N-terminal 58 residues, Met1–Arg58, are a transit peptide targeting the mitochondrion. The segment covering Ser27 to Pro53 has biased composition (polar residues). Residues Ser27 to Asn66 form a disordered region. Position 87 (His87) interacts with heme. The helical transmembrane segment at Ile105–Phe127 threads the bilayer.

In terms of assembly, component of complex II composed of eight subunits in plants: four classical SDH subunits SDH1, SDH2, SDH3 and SDH4 (a flavoprotein (FP), an iron-sulfur protein (IP), and a cytochrome b composed of a large and a small subunit.), as well as four subunits unknown in mitochondria from bacteria and heterotrophic eukaryotes. The cofactor is heme.

The protein localises to the mitochondrion inner membrane. It functions in the pathway carbohydrate metabolism; tricarboxylic acid cycle. Functionally, membrane-anchoring subunit of succinate dehydrogenase (SDH). In Oryza sativa subsp. japonica (Rice), this protein is Succinate dehydrogenase subunit 3-2, mitochondrial.